A 792-amino-acid chain; its full sequence is MNGEQSANGARTLPDDAVVVVPVSNVIFPGVVFPIVLDRPSAVAAAQQALREQHPLVLVLQQDVQAPDPGPQSLHRMGTLANVLRYVTGPDGAPHVACQGVERFEIDEWVEGFPFLVARGRRIPEPEAEGAAIEARFLHLRSQALEALQLLPQSPPGELVAAVEGASSPAALADLVAAYLDLQPPEKQQILETIDLEARLDKVSAFLAQRLEVLRLTSEIAQRTRQSLGERQRETLLREQMAAIQRELGEGEREELVELEAAIENAGMPEEVVQQARKELRRLARTPEAAAEYGMVRTYLEWLVELPWGVPEAAPIDLAEARRILDEDHFGLEKIKQRIIEHLAVRRLAPEGKAPILCFVGPPGVGKTSLGQSIARAMHRPFVRVSLGGVHDESEIRGHRRTYVGALPGNIIQAIRKAGRRDCVMMLDEIDKMSAGIHGDPSAALLEVLDPEQNVAFRDNYLAVPFDLSRVVFIATANMLDTIPGPLRDRMEVIQLSGYTAGEKRQIAERYLVRRQLEANGLTAEQVQIEPAALETLIARYTREAGVRSLEREIGRLLRHVAVRFAEGHTEPVRIGPTNLEPILGPPRVENEVAMRTSVPGVATGLAWTPVGGEILFIEATRTPGDGRLILTGQLGEVMRESAQTALSLVKSRAEALGVTPSLFKESDIHIHVPAGATPKDGPSAGVAMTMALISLLTDRTVRSDTAMTGEISLRGLVLPVGGIKEKVVAAATAGVRRVLLPARNRADERDIPEETRQTLELIWLERIEDAIEAGLDPRRGDVRQTQVRAAS.

Residues 16 to 211 form the Lon N-terminal domain; it reads DAVVVVPVSN…KVSAFLAQRL (196 aa). 361-368 is a binding site for ATP; that stretch reads GPPGVGKT. The region spanning 597 to 778 is the Lon proteolytic domain; that stretch reads TSVPGVATGL…EDAIEAGLDP (182 aa). Catalysis depends on residues Ser-684 and Lys-727.

This sequence belongs to the peptidase S16 family. Homohexamer. Organized in a ring with a central cavity.

It is found in the cytoplasm. It catalyses the reaction Hydrolysis of proteins in presence of ATP.. ATP-dependent serine protease that mediates the selective degradation of mutant and abnormal proteins as well as certain short-lived regulatory proteins. Required for cellular homeostasis and for survival from DNA damage and developmental changes induced by stress. Degrades polypeptides processively to yield small peptide fragments that are 5 to 10 amino acids long. Binds to DNA in a double-stranded, site-specific manner. The polypeptide is Lon protease (Phenylobacterium zucineum (strain HLK1)).